The sequence spans 319 residues: 4-diphosphocytidyl-2-C-methyl-D-erythritol kinase (319 aa).

Lys21 is a catalytic residue. Position 106–116 (106–116 (PIGAGLAGGSS)) interacts with ATP. Asp148 is a catalytic residue.

Belongs to the GHMP kinase family. IspE subfamily.

The enzyme catalyses 4-CDP-2-C-methyl-D-erythritol + ATP = 4-CDP-2-C-methyl-D-erythritol 2-phosphate + ADP + H(+). It functions in the pathway isoprenoid biosynthesis; isopentenyl diphosphate biosynthesis via DXP pathway; isopentenyl diphosphate from 1-deoxy-D-xylulose 5-phosphate: step 3/6. Functionally, catalyzes the phosphorylation of the position 2 hydroxy group of 4-diphosphocytidyl-2C-methyl-D-erythritol. This Prochlorococcus marinus (strain MIT 9303) protein is 4-diphosphocytidyl-2-C-methyl-D-erythritol kinase.